A 613-amino-acid polypeptide reads, in one-letter code: Probable potassium transport system protein Kup (613 aa).

Helical transmembrane passes span Val38 to Leu58, Trp91 to Thr111, Pro128 to Phe148, Phe159 to Ile179, Phe206 to Met226, Trp238 to Leu258, Ala270 to Ile290, Ile328 to Phe348, Ala357 to Ala377, Gly387 to Val407, and Leu410 to Thr430.

The protein belongs to the HAK/KUP transporter (TC 2.A.72) family.

It is found in the cell inner membrane. The catalysed reaction is K(+)(in) + H(+)(in) = K(+)(out) + H(+)(out). Its function is as follows. Transport of potassium into the cell. Likely operates as a K(+):H(+) symporter. This is Probable potassium transport system protein Kup from Chlorobaculum tepidum (strain ATCC 49652 / DSM 12025 / NBRC 103806 / TLS) (Chlorobium tepidum).